We begin with the raw amino-acid sequence, 203 residues long: uncharacterized protein (203 aa).

A helical transmembrane segment spans residues 171-191 (VGYLSIWLKEYWYLVVLFVLI).

It localises to the membrane. This is an uncharacterized protein from Methanocaldococcus jannaschii (strain ATCC 43067 / DSM 2661 / JAL-1 / JCM 10045 / NBRC 100440) (Methanococcus jannaschii).